The sequence spans 257 residues: MKRFILILQFLTRIPIKLNVGFDDEFYKSIVYFPLVGFVIGILSYLIGWISMLLFEPFIASIIITLAGVLITGGLHIDGLGDTFDAIYSYRDKEKMLEIMKDSRLGTNSLLAIMFVLLLKVGFVYDIISNNSLWVIIFMPMIARLGVMLLTYKTVTPREKGMGNLFIGKLTTSMLITAIIYTLLIVALITKFIFLLPNIVLIKVLGSIIVVFVFIILFKKHIYKKIDGVTGDILGCGIELSELVYLIYIYLLIFMFF.

7 consecutive transmembrane segments (helical) span residues 30–50 (IVYF…IGWI), 52–72 (MLLF…VLIT), 109–129 (SLLA…DIIS), 132–152 (SLWV…LLTY), 175–195 (LITA…FIFL), 198–218 (NIVL…IILF), and 237–257 (GIEL…FMFF).

It belongs to the CobS family. Mg(2+) serves as cofactor.

It is found in the cell membrane. It catalyses the reaction alpha-ribazole + adenosylcob(III)inamide-GDP = adenosylcob(III)alamin + GMP + H(+). The catalysed reaction is alpha-ribazole 5'-phosphate + adenosylcob(III)inamide-GDP = adenosylcob(III)alamin 5'-phosphate + GMP + H(+). The protein operates within cofactor biosynthesis; adenosylcobalamin biosynthesis; adenosylcobalamin from cob(II)yrinate a,c-diamide: step 7/7. In terms of biological role, joins adenosylcobinamide-GDP and alpha-ribazole to generate adenosylcobalamin (Ado-cobalamin). Also synthesizes adenosylcobalamin 5'-phosphate from adenosylcobinamide-GDP and alpha-ribazole 5'-phosphate. The chain is Adenosylcobinamide-GDP ribazoletransferase from Clostridioides difficile (strain 630) (Peptoclostridium difficile).